Here is a 169-residue protein sequence, read N- to C-terminus: Myosin regulatory light chain 11 (169 aa).

The residue at position 2 (Ala-2) is a N,N,N-trimethylalanine. Phosphoserine occurs at positions 15 and 16. Phosphothreonine is present on residues Thr-25 and Thr-35. Positions 25-60 constitute an EF-hand 1 domain; the sequence is TQIQEFKEAFTVIDQNRDGIIDKEDLRDTFAAMGRL. Residues Asp-38, Asn-40, Asp-42, and Asp-49 each coordinate Ca(2+). Ser-75 bears the Phosphoserine mark. EF-hand domains are found at residues 95 to 130 and 131 to 166; these read DPED…QCDR and FSQE…GDAK. Thr-101 bears the Phosphothreonine mark.

As to quaternary structure, myosin is a hexamer of 2 heavy chains and 4 light chains.

Its function is as follows. Myosin regulatory subunit that plays an essential to maintain muscle integrity during early development. Plays a role in muscle contraction. This is Myosin regulatory light chain 11 (Myl11) from Rattus norvegicus (Rat).